Consider the following 93-residue polypeptide: Small ribosomal subunit protein uS19 (93 aa).

This sequence belongs to the universal ribosomal protein uS19 family.

Protein S19 forms a complex with S13 that binds strongly to the 16S ribosomal RNA. The chain is Small ribosomal subunit protein uS19 from Lacticaseibacillus paracasei (strain ATCC 334 / BCRC 17002 / CCUG 31169 / CIP 107868 / KCTC 3260 / NRRL B-441) (Lactobacillus paracasei).